The sequence spans 458 residues: L-hydantoinase (458 aa).

Zn(2+)-binding residues include His60, His62, Lys147, His183, His239, and Asp312. Lys147 is modified (N6-carboxylysine).

Homotetramer. It depends on Zn(2+) as a cofactor. In terms of processing, carboxylation allows a single lysine to coordinate two zinc ions.

Its function is as follows. Rather more predominant for the cleavage of aryl- than for alkyl-hydantoin derivatives. The stereoselectivity of this enzyme depends on the substrate used for bioconversion: strictly L-selective for the cleavage of D,L-5-indolylmethylhydantoin, but D-selective for the hydrolysis of D,L-methylthioethylhydantoin. The protein is L-hydantoinase (lhyD) of Paenarthrobacter aurescens (Arthrobacter aurescens).